The chain runs to 275 residues: 3',5'-cyclic adenosine monophosphate phosphodiesterase CpdA (275 aa).

Fe cation contacts are provided by Asp-22, His-24, Asp-64, Asn-94, His-164, His-203, and His-205. Residues His-24, Asp-64, and 94 to 95 (NH) contribute to the AMP site. His-205 is a binding site for AMP.

The protein belongs to the cyclic nucleotide phosphodiesterase class-III family. Fe(2+) serves as cofactor.

It carries out the reaction 3',5'-cyclic AMP + H2O = AMP + H(+). Its function is as follows. Hydrolyzes cAMP to 5'-AMP. Plays an important regulatory role in modulating the intracellular concentration of cAMP, thereby influencing cAMP-dependent processes. The chain is 3',5'-cyclic adenosine monophosphate phosphodiesterase CpdA from Escherichia coli O157:H7.